A 107-amino-acid polypeptide reads, in one-letter code: Protamine-2 (107 aa).

Residues 1-94 are disordered; it reads MVRYRMRSPS…RRGCRRSRRR (94 aa). Phosphoserine is present on residues S8, S10, and S33. Residues 43 to 94 show a composition bias toward basic residues; sequence THRGHHHHRHRRCSRKRLHRIHKRRRSCRRRRRHSCRHRRRHRRGCRRSRRR.

Belongs to the protamine P2 family. Interacts with TDRP. Post-translationally, proteolytic processing into mature chains is required for histone eviction during spermatogenesis. Transition proteins (TNP1 and TNP2) are required for processing. In terms of tissue distribution, expressed in spermatids (at protein level).

It localises to the nucleus. The protein localises to the chromosome. Protamines substitute for histones in the chromatin of sperm during the haploid phase of spermatogenesis. They compact sperm DNA into a highly condensed, stable and inactive complex. The chain is Protamine-2 (Prm2) from Mus musculus (Mouse).